Here is a 565-residue protein sequence, read N- to C-terminus: Dihydroxy-acid dehydratase (565 aa).

Position 80 (aspartate 80) interacts with Mg(2+). Cysteine 121 contributes to the [2Fe-2S] cluster binding site. Positions 122 and 123 each coordinate Mg(2+). Lysine 123 carries the post-translational modification N6-carboxylysine. Cysteine 194 is a [2Fe-2S] cluster binding site. Mg(2+) is bound at residue glutamate 447. Serine 473 (proton acceptor) is an active-site residue.

The protein belongs to the IlvD/Edd family. In terms of assembly, homodimer. The cofactor is [2Fe-2S] cluster. Mg(2+) is required as a cofactor.

It catalyses the reaction (2R)-2,3-dihydroxy-3-methylbutanoate = 3-methyl-2-oxobutanoate + H2O. The catalysed reaction is (2R,3R)-2,3-dihydroxy-3-methylpentanoate = (S)-3-methyl-2-oxopentanoate + H2O. It functions in the pathway amino-acid biosynthesis; L-isoleucine biosynthesis; L-isoleucine from 2-oxobutanoate: step 3/4. It participates in amino-acid biosynthesis; L-valine biosynthesis; L-valine from pyruvate: step 3/4. In terms of biological role, functions in the biosynthesis of branched-chain amino acids. Catalyzes the dehydration of (2R,3R)-2,3-dihydroxy-3-methylpentanoate (2,3-dihydroxy-3-methylvalerate) into 2-oxo-3-methylpentanoate (2-oxo-3-methylvalerate) and of (2R)-2,3-dihydroxy-3-methylbutanoate (2,3-dihydroxyisovalerate) into 2-oxo-3-methylbutanoate (2-oxoisovalerate), the penultimate precursor to L-isoleucine and L-valine, respectively. This is Dihydroxy-acid dehydratase from Chlorobium luteolum (strain DSM 273 / BCRC 81028 / 2530) (Pelodictyon luteolum).